A 239-amino-acid polypeptide reads, in one-letter code: 1-(5-phosphoribosyl)-5-[(5-phosphoribosylamino)methylideneamino] imidazole-4-carboxamide isomerase (239 aa).

Catalysis depends on Asp8, which acts as the Proton acceptor. The active-site Proton donor is the Asp129.

The protein belongs to the HisA/HisF family.

Its subcellular location is the cytoplasm. The catalysed reaction is 1-(5-phospho-beta-D-ribosyl)-5-[(5-phospho-beta-D-ribosylamino)methylideneamino]imidazole-4-carboxamide = 5-[(5-phospho-1-deoxy-D-ribulos-1-ylimino)methylamino]-1-(5-phospho-beta-D-ribosyl)imidazole-4-carboxamide. Its pathway is amino-acid biosynthesis; L-histidine biosynthesis; L-histidine from 5-phospho-alpha-D-ribose 1-diphosphate: step 4/9. This Bacillus cereus (strain Q1) protein is 1-(5-phosphoribosyl)-5-[(5-phosphoribosylamino)methylideneamino] imidazole-4-carboxamide isomerase.